We begin with the raw amino-acid sequence, 843 residues long: Alpha-L-fucosidase 2 (843 aa).

The N-terminal stretch at 1–27 (MAEKSSFFVHFSCLLLLLTIIITCGEG) is a signal peptide. Asn-62, Asn-253, Asn-365, and Asn-605 each carry an N-linked (GlcNAc...) asparagine glycan.

The protein belongs to the glycosyl hydrolase 95 family. As to expression, ubiquitous. Highest expression in vascular tissues, leaf trichomes, root elongation zone and emerging lateral roots.

The protein resides in the secreted. It is found in the extracellular space. Its subcellular location is the apoplast. It catalyses the reaction an alpha-L-fucoside + H2O = L-fucose + an alcohol. Its function is as follows. Hydrolyzes alpha-1,2-linked fucose. Also active on fucosylated xyloglucan oligosaccharides. No activity with 3-fucosyllactose, p-nitrophenyl-alpha-I-fucopyranoside, lacto-N-fucopentaose II, lacto-N-fucopentaose III or alpha 1,6-fucosylated chitopentaose. Involved in apoplastic xyloglucan metabolism. The sequence is that of Alpha-L-fucosidase 2 (FUC95A) from Arabidopsis thaliana (Mouse-ear cress).